The following is a 443-amino-acid chain: Tryptophan synthase beta chain (443 aa).

K110 carries the N6-(pyridoxal phosphate)lysine modification.

It belongs to the TrpB family. Tetramer of two alpha and two beta chains. Pyridoxal 5'-phosphate serves as cofactor.

The catalysed reaction is (1S,2R)-1-C-(indol-3-yl)glycerol 3-phosphate + L-serine = D-glyceraldehyde 3-phosphate + L-tryptophan + H2O. Its pathway is amino-acid biosynthesis; L-tryptophan biosynthesis; L-tryptophan from chorismate: step 5/5. In terms of biological role, the beta subunit is responsible for the synthesis of L-tryptophan from indole and L-serine. The polypeptide is Tryptophan synthase beta chain (Thermococcus onnurineus (strain NA1)).